The sequence spans 360 residues: MLVWLASFLEQYFSSFHVISYLTVRAVLSLLTALLLSLWIGPKMILRLQIFKFGQEVRNDGPESHFQKRGTPTMGGIMILATITASSLLWGDLSNPYIWCSLFVLLGYGAIGFVDDYRKIKYKNTDGLIARWKYFWLSVVAFIAVFTMYMIGKDTDATRLVVPFFKDIMPQLGLFYIVLAYFVIVGTSNAVNLTDGLDGLAIMPTVFVAGAFAIIAWATGNVEISKYLYIPYVSYTSELVIFCTAIVGAGLGFLWFNTYPAQVFMGDVGSLALGGALGVIAVLVRQEFLLVIMGGVFVMETVSVILQVGSYKLRKKRIFRMAPIHHHYELKGWPEPRVIIRFWIISLMLVLLGLVTLKLR.

The next 10 helical transmembrane spans lie at 26–46, 73–93, 94–114, 132–152, 168–188, 199–219, 239–259, 263–283, 288–308, and 338–358; these read AVLS…KMIL, TMGG…WGDL, SNPY…IGFV, WKYF…YMIG, IMPQ…VGTS, GLAI…AWAT, LVIF…FNTY, VFMG…IAVL, FLLV…ILQV, and VIIR…VTLK.

This sequence belongs to the glycosyltransferase 4 family. MraY subfamily. Mg(2+) is required as a cofactor.

Its subcellular location is the cell inner membrane. It catalyses the reaction UDP-N-acetyl-alpha-D-muramoyl-L-alanyl-gamma-D-glutamyl-meso-2,6-diaminopimeloyl-D-alanyl-D-alanine + di-trans,octa-cis-undecaprenyl phosphate = di-trans,octa-cis-undecaprenyl diphospho-N-acetyl-alpha-D-muramoyl-L-alanyl-D-glutamyl-meso-2,6-diaminopimeloyl-D-alanyl-D-alanine + UMP. Its pathway is cell wall biogenesis; peptidoglycan biosynthesis. In terms of biological role, catalyzes the initial step of the lipid cycle reactions in the biosynthesis of the cell wall peptidoglycan: transfers peptidoglycan precursor phospho-MurNAc-pentapeptide from UDP-MurNAc-pentapeptide onto the lipid carrier undecaprenyl phosphate, yielding undecaprenyl-pyrophosphoryl-MurNAc-pentapeptide, known as lipid I. The protein is Phospho-N-acetylmuramoyl-pentapeptide-transferase of Actinobacillus succinogenes (strain ATCC 55618 / DSM 22257 / CCUG 43843 / 130Z).